The primary structure comprises 262 residues: PsbP domain-containing protein 6, chloroplastic (262 aa).

A disulfide bond links Cys-128 and Cys-132.

The protein belongs to the PsbP family.

The protein localises to the plastid. Its subcellular location is the chloroplast thylakoid lumen. May be involved in the redox regulation of photosystem II. The polypeptide is PsbP domain-containing protein 6, chloroplastic (PPD6) (Arabidopsis thaliana (Mouse-ear cress)).